We begin with the raw amino-acid sequence, 302 residues long: Pathogenicity locus probable regulatory protein HrpS (302 aa).

In terms of domain architecture, Sigma-54 factor interaction spans aspartate 9–leucine 237. Residues glycine 37–aspartate 44 and alanine 99–glutamate 108 each bind ATP. A DNA-binding region (H-T-H motif) is located at residues isoleucine 279–lysine 298.

Member of the two-component regulatory system HrpR/HrpS that regulates the activation of the sigma factor hrpL which itself induces the expression of hprD as well as other hrp loci which are involved in plant pathogenicity, hrmA and avr genes. Probably interacts with sigma-54. In Pseudomonas savastanoi pv. phaseolicola (Pseudomonas syringae pv. phaseolicola), this protein is Pathogenicity locus probable regulatory protein HrpS (hrpS).